Consider the following 488-residue polypeptide: Cysteine--tRNA ligase (488 aa).

C40 contributes to the Zn(2+) binding site. The short motif at 42 to 52 (MTVYDYCHIGH) is the 'HIGH' region element. Positions 221, 246, and 250 each coordinate Zn(2+). Residues 278–282 (KMSKS) carry the 'KMSKS' region motif. K281 provides a ligand contact to ATP.

The protein belongs to the class-I aminoacyl-tRNA synthetase family. As to quaternary structure, monomer. It depends on Zn(2+) as a cofactor.

Its subcellular location is the cytoplasm. The catalysed reaction is tRNA(Cys) + L-cysteine + ATP = L-cysteinyl-tRNA(Cys) + AMP + diphosphate. This chain is Cysteine--tRNA ligase, found in Psychrobacter cryohalolentis (strain ATCC BAA-1226 / DSM 17306 / VKM B-2378 / K5).